A 195-amino-acid polypeptide reads, in one-letter code: Phenoloxidase subunit 1 (195 aa).

Residue H10 coordinates Cu cation. N77, N97, and N98 each carry an N-linked (GlcNAc...) asparagine glycan.

It belongs to the tyrosinase family. Heterodimer. Cu(2+) serves as cofactor.

The protein localises to the secreted. It carries out the reaction 2 L-dopa + O2 = 2 L-dopaquinone + 2 H2O. The catalysed reaction is L-tyrosine + O2 = L-dopaquinone + H2O. In terms of biological role, this is a copper-containing oxidase that functions in the formation of pigments such as melanins and other polyphenolic compounds. Catalyzes the rate-limiting conversions of tyrosine to DOPA, DOPA to DOPA-quinone and possibly 5,6 dihydroxyindole to indole-5'6 quinone. The chain is Phenoloxidase subunit 1 from Simulium damnosum (Black fly).